The sequence spans 526 residues: O-phosphoserine--tRNA(Cys) ligase (526 aa).

Residues 189 to 191 (HMT), 234 to 236 (SAS), 276 to 277 (YY), and Asn-319 each bind substrate.

The protein belongs to the class-II aminoacyl-tRNA synthetase family. O-phosphoseryl-tRNA(Cys) synthetase subfamily. In terms of assembly, homotetramer. Interacts with SepCysS.

It catalyses the reaction tRNA(Cys) + O-phospho-L-serine + ATP = O-phospho-L-seryl-tRNA(Cys) + AMP + diphosphate. In terms of biological role, catalyzes the attachment of O-phosphoserine (Sep) to tRNA(Cys). The protein is O-phosphoserine--tRNA(Cys) ligase of Methanocorpusculum labreanum (strain ATCC 43576 / DSM 4855 / Z).